The sequence spans 386 residues: Putative gustatory receptor 22b (386 aa).

Over 1–48 the chain is Cytoplasmic; the sequence is MFGSSREIRPYLARQMLKTTLYGSWLLGIFPFTLDSGKRIRQLRRSRC. A helical transmembrane segment spans residues 49 to 69; that stretch reads LTLYGLVLNYFLIFTLIRLAF. Over 70 to 89 the chain is Extracellular; it reads EYRKHKLEAFKRNPVLEMIN. A helical membrane pass occupies residues 90 to 110; the sequence is VVIGIINVLSALIVHFMNFWG. Over 111–155 the chain is Cytoplasmic; it reads SRKVGEICNELLILEYQDFEGLNGRNCPNFNCFVIQKCLTILGQL. The helical transmembrane segment at 156-176 threads the bilayer; that stretch reads LSFFTLNFALPGLEFHICLVL. The Extracellular portion of the chain corresponds to 177-178; that stretch reads LS. A helical membrane pass occupies residues 179-199; sequence CLMEFSLNLNIMHYHVGVLLI. Topologically, residues 200–254 are cytoplasmic; sequence YRYVWLINEQLKDLVSQLKLNPETDFSRIHQFLSLYKRLLELNRKLVIAYEYQMT. The helical transmembrane segment at 255-275 threads the bilayer; it reads LFIIAQLSGNIVVIYFLIVYG. The Extracellular portion of the chain corresponds to 276–282; the sequence is LSMRTYS. The chain crosses the membrane as a helical span at residues 283 to 303; that stretch reads IFLVAFPNSLLINIWDFWLCI. Residues 304-363 lie on the Cytoplasmic side of the membrane; the sequence is AACDLTEKAGDETAIILKIFSDLEHRDDKLEMSVNEFAWLCSHRKFRFQLCGLFSMNCRM. Residues 364 to 384 form a helical membrane-spanning segment; it reads GFKMIITTFLYLVYLVQFDYM. The Extracellular segment spans residues 385–386; that stretch reads NL.

Belongs to the insect chemoreceptor superfamily. Gustatory receptor (GR) family. Gr22e subfamily. As to expression, expressed in taste bristles in the foreleg and labial palps. In larvae, is expressed in neurons of the dorsal and posterior pharyngeal sense organs. Expressed in taste neurons that mediate sensitivity to bitter compounds.

The protein localises to the cell membrane. Functionally, probable gustatory receptor which mediates acceptance or avoidance behavior, depending on its substrates. Seems to be involved in the sensing of bitter taste since it is expressed in neurons that mediate sensitivity to bitter compounds. This chain is Putative gustatory receptor 22b, found in Drosophila melanogaster (Fruit fly).